Reading from the N-terminus, the 408-residue chain is S-adenosylmethionine synthase (408 aa).

140–145 (GQGSVD) contributes to the ATP binding site.

Belongs to the AdoMet synthase 2 family. It depends on Mg(2+) as a cofactor.

The catalysed reaction is L-methionine + ATP + H2O = S-adenosyl-L-methionine + phosphate + diphosphate. It participates in amino-acid biosynthesis; S-adenosyl-L-methionine biosynthesis; S-adenosyl-L-methionine from L-methionine: step 1/1. Functionally, catalyzes the formation of S-adenosylmethionine from methionine and ATP. The protein is S-adenosylmethionine synthase of Caldivirga maquilingensis (strain ATCC 700844 / DSM 13496 / JCM 10307 / IC-167).